Reading from the N-terminus, the 468-residue chain is 6-phospho-beta-galactosidase (468 aa).

D-galactose 6-phosphate contacts are provided by Gln19, His116, Asn159, Glu160, and Asn297. Glu160 serves as the catalytic Proton donor. Glu375 serves as the catalytic Nucleophile. Residues Ser428, Trp429, Lys435, and Tyr437 each coordinate D-galactose 6-phosphate.

It belongs to the glycosyl hydrolase 1 family.

It carries out the reaction a 6-phospho-beta-D-galactoside + H2O = D-galactose 6-phosphate + an alcohol. Its pathway is carbohydrate metabolism; lactose degradation; D-galactose 6-phosphate and beta-D-glucose from lactose 6-phosphate: step 1/1. The chain is 6-phospho-beta-galactosidase from Streptococcus gordonii (strain Challis / ATCC 35105 / BCRC 15272 / CH1 / DL1 / V288).